The chain runs to 515 residues: Envelope glycoprotein (515 aa).

The first 33 residues, 1 to 33, serve as a signal peptide directing secretion; it reads MPKKRRSRRRPQPIIRWVSLTLTLLALCRPIQT. Topologically, residues 34–435 are extracellular; it reads WRCSLSLGNQ…LGLTAWVRET (402 aa). N-linked (GlcNAc...) asparagine; by host glycans are attached at residues Asn129 and Asn203. The short motif at 212–215 is the CXXC element; it reads CAIC. 3 cysteine pairs are disulfide-bonded: Cys212–Cys215, Cys212–Cys392, and Cys384–Cys391. N-linked (GlcNAc...) asparagine; by host glycans are attached at residues Asn230, Asn251, Asn256, Asn271, and Asn287. The tract at residues 304 to 324 is fusion peptide; it reads VAALTLGLALSVGLTGINVAV. Coiled-coil stretches lie at residues 330-376 and 388-420; these read QRLT…WLYI and NEPC…DWQW. Residue Asn351 is glycosylated (N-linked (GlcNAc...) asparagine; by host). The tract at residues 365 to 381 is immunosuppression; sequence AQNRRGLDWLYIRLGFQ. The CX6CC signature appears at 384–392; sequence CPTINEPCC. An N-linked (GlcNAc...) asparagine; by host glycan is attached at Asn398. A helical transmembrane segment spans residues 436–456; that stretch reads IHSVLSLFLLALFLLFLAPCL. A lipid anchor (S-palmitoyl cysteine; by host) is attached at Cys455. The Cytoplasmic portion of the chain corresponds to 457–515; the sequence is IKCLTSRLLKLLRQAPHFPEISLTPKPDSDYQALLPSAPEIYSHLSPVKPDYINLRPCP.

In terms of assembly, the mature envelope protein (Env) consists of a trimer of SU-TM heterodimers attached by a labile interchain disulfide bond. In terms of processing, specific enzymatic cleavages in vivo yield mature proteins. Envelope glycoproteins are synthesized as an inactive precursor that is N-glycosylated and processed likely by host cell furin or by a furin-like protease in the Golgi to yield the mature SU and TM proteins. The cleavage site between SU and TM requires the minimal sequence [KR]-X-[KR]-R. Post-translationally, the CXXC motif is highly conserved across a broad range of retroviral envelope proteins. It is thought to participate in the formation of a labile disulfide bond possibly with the CX6CC motif present in the transmembrane protein. Isomerization of the intersubunit disulfide bond to an SU intrachain disulfide bond is thought to occur upon receptor recognition in order to allow membrane fusion. The transmembrane protein is palmitoylated.

The protein localises to the virion membrane. Its subcellular location is the host cell membrane. In terms of biological role, the surface protein (SU) attaches the virus to the host cell by binding to its receptor. This interaction triggers the refolding of the transmembrane protein (TM) and is thought to activate its fusogenic potential by unmasking its fusion peptide. Fusion occurs at the host cell plasma membrane. Functionally, the transmembrane protein (TM) acts as a class I viral fusion protein. Under the current model, the protein has at least 3 conformational states: pre-fusion native state, pre-hairpin intermediate state, and post-fusion hairpin state. During viral and target cell membrane fusion, the coiled coil regions (heptad repeats) assume a trimer-of-hairpins structure, positioning the fusion peptide in close proximity to the C-terminal region of the ectodomain. The formation of this structure appears to drive apposition and subsequent fusion of viral and target cell membranes. Membranes fusion leads to delivery of the nucleocapsid into the cytoplasm. The protein is Envelope glycoprotein (env) of Bovine leukemia virus (isolate American FLK) (BLV).